The sequence spans 206 residues: Ectodysplasin-A receptor-associated adapter protein (206 aa).

Disordered stretches follow at residues 1–36 and 52–77; these read MRPL…DKYP and TLNC…TGDP. Composition is skewed to polar residues over residues 24-33 and 52-62; these read PSTLSFNTSD and TLNCPPNSDMK. One can recognise a Death domain in the interval 114 to 190; it reads DVIRIKLDPC…DVEKVLRRWV (77 aa).

Self-associates and binds to EDAR, TRAF1, TRAF2 and TRAF3.

It is found in the cytoplasm. Adapter protein that interacts with EDAR DEATH domain and couples the receptor to EDA signaling pathway during morphogenesis of ectodermal organs. Mediates the activation of NF-kappa-B. This Macaca fascicularis (Crab-eating macaque) protein is Ectodysplasin-A receptor-associated adapter protein (EDARADD).